The primary structure comprises 142 residues: Lysozyme X (142 aa).

The signal sequence occupies residues 1-19 (MRALLGICVLALVTPAVLG). The 123-residue stretch at 20 to 142 (RTMDRCSLAR…YLPPIDDCFV (123 aa)) folds into the C-type lysozyme domain. Disulfide bonds link C25-C140, C46-C130, C81-C97, and C93-C111. Active-site residues include E51 and D69.

It belongs to the glycosyl hydrolase 22 family. Found in the midgut.

It catalyses the reaction Hydrolysis of (1-&gt;4)-beta-linkages between N-acetylmuramic acid and N-acetyl-D-glucosamine residues in a peptidoglycan and between N-acetyl-D-glucosamine residues in chitodextrins.. In terms of biological role, unlikely to play an active role in the humoral immune defense. May have a function in the digestion of bacteria in the food. May be involved in the clearance of bacteria from the larval gut before metamorphosis. The chain is Lysozyme X (LysX) from Drosophila melanogaster (Fruit fly).